The sequence spans 455 residues: Notoamide E oxidase notB' (455 aa).

Residues Pro11–Leu31 traverse the membrane as a helical segment. FAD contacts are provided by Glu48 and Gly61. The N-linked (GlcNAc...) asparagine glycan is linked to Asn75. Arg121 lines the FAD pocket. Catalysis depends on residues Arg199 and Tyr229. FAD contacts are provided by Asp324 and Gly337.

This sequence belongs to the paxM FAD-dependent monooxygenase family. Requires FAD as cofactor.

Its subcellular location is the membrane. It catalyses the reaction notoamide E + NADPH + O2 + H(+) = notoamide C + NADP(+) + H2O. It carries out the reaction notoamide E + NADPH + O2 + H(+) = notoamide D + NADP(+) + H2O. It participates in alkaloid biosynthesis. Functionally, FAD-dependent monooxygenase; part of the gene cluster that mediates the biosynthesis of notoamide, a fungal indole alkaloid that belongs to a family of natural products containing a characteristic bicyclo[2.2.2]diazaoctane core. The first step of notoamide biosynthesis involves coupling of L-proline and L-tryptophan by the bimodular NRPS notE', to produce cyclo-L-tryptophan-L-proline called brevianamide F. The reverse prenyltransferase notF' then acts as a deoxybrevianamide E synthase and converts brevianamide F to deoxybrevianamide E via reverse prenylation at C-2 of the indole ring leading to the bicyclo[2.2.2]diazaoctane core. Deoxybrevianamide E is further hydroxylated at C-6 of the indole ring, likely catalyzed by the cytochrome P450 monooxygenase notG', to yield 6-hydroxy-deoxybrevianamide E. 6-hydroxy-deoxybrevianamide E is a specific substrate of the prenyltransferase notC' for normal prenylation at C-7 to produce 6-hydroxy-7-prenyl-deoxybrevianamide, also called notoamide S. As the proposed pivotal branching point in notoamide biosynthesis, notoamide S can be diverted to notoamide E through an oxidative pyran ring closure putatively catalyzed by either notH' cytochrome P450 monooxygenase or the notD' FAD-linked oxidoreductase. This step would be followed by an indole 2,3-epoxidation-initiated pinacol-like rearrangement catalyzed by the notB' FAD-dependent monooxygenase leading to the formation of notoamide C and notoamide D. On the other hand notoamide S is converted to notoamide T by notH' (or notD'), a bifunctional oxidase that also functions as the intramolecular Diels-Alderase responsible for generation of (-)-notoamide T. To generate antipodal (+)-notoaminide T, notH (or notD) in Aspergillus strain MF297-2 is expected to catalyze a Diels-Alder reaction leading to the opposite stereochemistry. The remaining oxidoreductase notD' (or notH') likely catalyzes the oxidative pyran ring formation to yield (-)-stephacidin A. The FAD-dependent monooxygenase notI' is highly similar to notB' and is predicted to catalyze a similar conversion from (-)-stephacidin A to (+)-notoamide B via the 2,3-epoxidation of (-)-stephacidin A followed by a pinacol-type rearrangement. Finally, it remains unclear which enzyme could be responsible for the final hydroxylation steps leading to notoamide A and sclerotiamide. This chain is Notoamide E oxidase notB', found in Aspergillus versicolor.